The chain runs to 179 residues: uncharacterized protein (179 aa).

Residues 1 to 10 (ATLSAGQPAS) show a composition bias toward polar residues. Disordered stretches follow at residues 1–35 (ATLS…RGKC), 59–80 (VRRN…PIVT), and 131–179 (ECPT…STCR). The segment covering 23 to 33 (LHRHPAPKRRG) has biased composition (basic residues). The span at 149–158 (TPSRVRRSRR) shows a compositional bias: basic residues.

This is an uncharacterized protein from Human cytomegalovirus (strain AD169) (HHV-5).